The chain runs to 433 residues: Enolase (433 aa).

Q167 is a binding site for (2R)-2-phosphoglycerate. Catalysis depends on E209, which acts as the Proton donor. Residues D246, E291, and D318 each coordinate Mg(2+). Positions 343, 372, 373, and 394 each coordinate (2R)-2-phosphoglycerate. The Proton acceptor role is filled by K343.

It belongs to the enolase family. In terms of assembly, component of the RNA degradosome, a multiprotein complex involved in RNA processing and mRNA degradation. The cofactor is Mg(2+).

It localises to the cytoplasm. Its subcellular location is the secreted. The protein localises to the cell surface. The enzyme catalyses (2R)-2-phosphoglycerate = phosphoenolpyruvate + H2O. It functions in the pathway carbohydrate degradation; glycolysis; pyruvate from D-glyceraldehyde 3-phosphate: step 4/5. Catalyzes the reversible conversion of 2-phosphoglycerate (2-PG) into phosphoenolpyruvate (PEP). It is essential for the degradation of carbohydrates via glycolysis. This Actinobacillus succinogenes (strain ATCC 55618 / DSM 22257 / CCUG 43843 / 130Z) protein is Enolase.